Consider the following 358-residue polypeptide: MSKDNPKDFGTPSDSKERLKAIETAMTQIEKAFGKGSIMRLGAESKLDVQAVSTGSLSLDLALGVGGIPRGRITEIYGPESGGKTTLALSVIAQAQRAGGTCAFIDAEHALDPVYARSLGVNTDELLVSQPDNGEQALEIMELLVRSGAIDVVVVDSVAALTPRAEIEGEMGDSLPGLQARLMSQALRKLTAILSKTGTAAIFINQVREKIGVMYGNPETTTGGRALKFYASVRLDVRKIGQPVKLGNDAVGNTVKVKTVKNKVAPPFKEVELTLLYGKGFDQLSDLVTLAADMDIIKKAGSFYSYGEERIGQGKEKAIAYIAERPELEQEIRDRVLAAIKEGRDPIAAVPETPALAE.

78–85 contributes to the ATP binding site; it reads GPESGGKT.

The protein belongs to the RecA family.

Its subcellular location is the cytoplasm. In terms of biological role, can catalyze the hydrolysis of ATP in the presence of single-stranded DNA, the ATP-dependent uptake of single-stranded DNA by duplex DNA, and the ATP-dependent hybridization of homologous single-stranded DNAs. It interacts with LexA causing its activation and leading to its autocatalytic cleavage. The polypeptide is Protein RecA (Deinococcus geothermalis (strain DSM 11300 / CIP 105573 / AG-3a)).